The primary structure comprises 350 residues: Variable large protein 4 (350 aa).

The first 18 residues, methionine 1–serine 18, serve as a signal peptide directing secretion. Cysteine 19 carries the N-palmitoyl cysteine lipid modification. Cysteine 19 carries the S-diacylglycerol cysteine lipid modification.

This sequence belongs to the variable large protein (Vlp) family. Delta subfamily.

It is found in the cell outer membrane. In terms of biological role, the Vlp and Vsp proteins are antigenically distinct proteins, only one vlp or vsp gene is transcriptionally active at any one time. Switching between these genes is a mechanism of host immune response evasion. The chain is Variable large protein 4 from Borrelia hermsii.